A 306-amino-acid polypeptide reads, in one-letter code: D-alanine--D-alanine ligase B (306 aa).

Catalysis depends on residues glutamate 15 and serine 150. In terms of domain architecture, ATP-grasp spans 101–303 (KLLWQGAGLP…FSQLVVRILE (203 aa)). 134 to 189 (ISALGLPVIVKPSREGSSVGMSKVVAENALQDALRLAFQHDEEVLIEKWLSGPEFT) contacts ATP. Residues aspartate 257, glutamate 270, and asparagine 272 each contribute to the Mg(2+) site. Residue serine 281 is part of the active site.

This sequence belongs to the D-alanine--D-alanine ligase family. As to quaternary structure, monomer. It depends on Mg(2+) as a cofactor. Requires Mn(2+) as cofactor.

The protein localises to the cytoplasm. The enzyme catalyses 2 D-alanine + ATP = D-alanyl-D-alanine + ADP + phosphate + H(+). The protein operates within cell wall biogenesis; peptidoglycan biosynthesis. In terms of biological role, cell wall formation. This Escherichia coli (strain K12) protein is D-alanine--D-alanine ligase B (ddlB).